The sequence spans 134 residues: Methylglyoxal synthase (134 aa).

The region spanning 1–134 (MHIALIAHDE…DWRDLRRNDE (134 aa)) is the MGS-like domain. Substrate is bound by residues His-8, Lys-12, 34-37 (TGTT), and 54-55 (SG). The Proton donor/acceptor role is filled by Asp-60. His-87 serves as a coordination point for substrate.

Belongs to the methylglyoxal synthase family.

The catalysed reaction is dihydroxyacetone phosphate = methylglyoxal + phosphate. Its function is as follows. Catalyzes the formation of methylglyoxal from dihydroxyacetone phosphate. In Listeria innocua serovar 6a (strain ATCC BAA-680 / CLIP 11262), this protein is Methylglyoxal synthase.